The primary structure comprises 460 residues: Lipase member H-A (460 aa).

The signal sequence occupies residues 1–26 (MLLSFYFNGLLLVGCLLSWGRSDTEG). Asn-67 and Asn-75 each carry an N-linked (GlcNAc...) asparagine glycan. The Nucleophile role is filled by Ser-163. N-linked (GlcNAc...) asparagine glycosylation occurs at Asn-177. Asp-187 (charge relay system) is an active-site residue. An intrachain disulfide couples Cys-242 to Cys-255. The Charge relay system role is filled by His-257. Intrachain disulfides connect Cys-279–Cys-290 and Cys-293–Cys-301. The N-linked (GlcNAc...) asparagine glycan is linked to Asn-289. Asn-366 carries N-linked (GlcNAc...) asparagine glycosylation. Cysteines 436 and 455 form a disulfide.

It belongs to the AB hydrolase superfamily. Lipase family.

It is found in the secreted. The protein resides in the cell membrane. It catalyses the reaction 1-hexadecanoyl-2-(9Z-octadecenoyl)-sn-glycero-3-phosphate + H2O = 2-(9Z-octadecenoyl)-sn-glycero-3-phosphate + hexadecanoate + H(+). Functionally, hydrolyzes specifically phosphatidic acid (PA) to produce 2-acyl lysophosphatidic acid (LPA; a potent bioactive lipid mediator) and fatty acid. Does not hydrolyze other phospholipids, like phosphatidylserine (PS), phosphatidylcholine (PC) and phosphatidylethanolamine (PE) or triacylglycerol (TG). The polypeptide is Lipase member H-A (liph-a) (Xenopus laevis (African clawed frog)).